Here is a 91-residue protein sequence, read N- to C-terminus: Putative regulatory protein Helmi_20580 (91 aa).

The protein belongs to the RemA family.

The polypeptide is Putative regulatory protein Helmi_20580 (Heliobacterium modesticaldum (strain ATCC 51547 / Ice1)).